A 62-amino-acid polypeptide reads, in one-letter code: U-myrmeciitoxin(01)-Mg3a (62 aa).

Residues 1–24 (MKTTVILLLAIAIIFAIMTTLTSA) form the signal peptide.

Expressed by the venom gland.

The protein resides in the secreted. In terms of biological role, may have antimicrobial properties, like most ant linear peptides. The protein is U-myrmeciitoxin(01)-Mg3a of Myrmecia gulosa (Red bulldog ant).